Here is a 322-residue protein sequence, read N- to C-terminus: Elongation factor P--(R)-beta-lysine ligase (322 aa).

75–77 (SPE) contacts substrate. 99 to 101 (RNE) contributes to the ATP binding site. Residue tyrosine 117 participates in substrate binding. 241 to 242 (EL) is an ATP binding site. Glutamate 248 provides a ligand contact to substrate. Glycine 297 contacts ATP.

This sequence belongs to the class-II aminoacyl-tRNA synthetase family. EpmA subfamily. As to quaternary structure, homodimer.

It catalyses the reaction D-beta-lysine + L-lysyl-[protein] + ATP = N(6)-((3R)-3,6-diaminohexanoyl)-L-lysyl-[protein] + AMP + diphosphate + H(+). Functionally, with EpmB is involved in the beta-lysylation step of the post-translational modification of translation elongation factor P (EF-P). Catalyzes the ATP-dependent activation of (R)-beta-lysine produced by EpmB, forming a lysyl-adenylate, from which the beta-lysyl moiety is then transferred to the epsilon-amino group of a conserved specific lysine residue in EF-P. The protein is Elongation factor P--(R)-beta-lysine ligase of Avibacterium paragallinarum (Haemophilus gallinarum).